Reading from the N-terminus, the 735-residue chain is Muskelin (735 aa).

A2 carries the N-acetylalanine modification. One can recognise a LisH domain in the interval 172–204 (REQEAIRLCLKHFRQHNYTEAFESLQKKTKIAL). In terms of domain architecture, CTLH spans 206–258 (HPMLTDIHDKLVLKGDFDACEELIEKAVNDGLFNQYISQQEYKPRWSQIIPKS). Kelch repeat units lie at residues 284 to 330 (TVYL…SCHK), 339 to 391 (QIYT…FDHQ), 408 to 458 (ILTC…SRIG), 469 to 515 (CLYV…TGFT), 526 to 578 (EIHV…SLQE), and 597 to 651 (VHYL…AQVD).

Homodimer; may form higher oligomers. Identified in the CTLH complex that contains GID4, RANBP9 and/or RANBP10, MKLN1, MAEA, RMND5A (or alternatively its paralog RMND5B), GID8, ARMC8, WDR26 and YPEL5. Within this complex, MAEA, RMND5A (or alternatively its paralog RMND5B), GID8, WDR26, and RANBP9 and/or RANBP10 form the catalytic core, while GID4, MKLN1, ARMC8 and YPEL5 have ancillary roles. Interacts with RANBP9. Part of a complex consisting of RANBP9, MKLN1 and GID8. Interacts with GABRA1. Interacts with the C-terminal tail of PTGER3.

The protein localises to the cytoplasm. It localises to the cytosol. The protein resides in the nucleus. It is found in the nucleoplasm. Its subcellular location is the cell projection. The protein localises to the ruffle. It localises to the cell cortex. The protein resides in the synapse. It is found in the postsynapse. Functionally, component of the CTLH E3 ubiquitin-protein ligase complex that selectively accepts ubiquitin from UBE2H and mediates ubiquitination and subsequent proteasomal degradation of the transcription factor HBP1. Required for internalization of the GABA receptor GABRA1 from the cell membrane via endosomes and subsequent GABRA1 degradation. Acts as a mediator of cell spreading and cytoskeletal responses to the extracellular matrix component THBS1. In Homo sapiens (Human), this protein is Muskelin (MKLN1).